The following is a 651-amino-acid chain: Maternal embryonic leucine zipper kinase (651 aa).

One can recognise a Protein kinase domain in the interval Tyr11–Ile263. ATP is bound by residues Ile17–Val25 and Lys40. Thr56 bears the Phosphothreonine; by autocatalysis mark. Asp132 serves as the catalytic Proton acceptor. Tyr163 carries the phosphotyrosine; by autocatalysis modification. Residue Thr167 is modified to Phosphothreonine; by autocatalysis. 2 positions are modified to phosphoserine; by autocatalysis: Ser171 and Ser253. Residues Leu282–Leu321 are UBA-like. The autoinhibitory region stretch occupies residues Arg326–Val651. Phosphoserine; by autocatalysis occurs at positions 336, 343, and 356. Tyr367 carries the post-translational modification Phosphotyrosine. The residue at position 391 (Ser391) is a Phosphoserine; by autocatalysis. Position 398 is a phosphothreonine; by autocatalysis (Thr398). At Ser407 the chain carries Phosphoserine; by autocatalysis. At Thr409 the chain carries Phosphothreonine. Residue Ser431 is modified to Phosphoserine; by autocatalysis. Thr478 is modified (phosphothreonine). Phosphothreonine; by autocatalysis is present on Thr494. The residue at position 498 (Ser498) is a Phosphoserine. Ser505 carries the phosphoserine; by autocatalysis modification. Thr518 bears the Phosphothreonine mark. At Ser529 the chain carries Phosphoserine; by autocatalysis. A Phosphoserine modification is found at Ser529. Thr539 bears the Phosphothreonine; by autocatalysis mark. The KA1 domain occupies Ser602–Val651.

Belongs to the protein kinase superfamily. CAMK Ser/Thr protein kinase family. SNF1 subfamily. Monomer. Interacts with ZNF622 and PPP1R8. Autophosphorylated: autophosphorylation of the T-loop at Thr-167 and Ser-171 is required for activation. Thr-478 phosphorylation during mitosis promotes interaction with PPP1R8. In terms of tissue distribution, expressed in placenta, kidney, thymus, testis, ovary and intestine.

The protein resides in the cell membrane. It catalyses the reaction L-tyrosyl-[protein] + ATP = O-phospho-L-tyrosyl-[protein] + ADP + H(+). The enzyme catalyses L-seryl-[protein] + ATP = O-phospho-L-seryl-[protein] + ADP + H(+). The catalysed reaction is L-threonyl-[protein] + ATP = O-phospho-L-threonyl-[protein] + ADP + H(+). Activated by autophosphorylation of the T-loop at Thr-167 and Ser-171: in contrast to other members of the SNF1 subfamily, phosphorylation at Thr-167 is not mediated by STK11/LKB1 but via autophosphorylation instead. Inhibited by calcium-binding. Kinase activity is also regulated by reducing agents: dithiothreitol (DTT) or reduced glutathione are required for kinase activity in vitro; such dependence is however not due to the presence of disulfide bonds. Functionally, serine/threonine-protein kinase involved in various processes such as cell cycle regulation, self-renewal of stem cells, apoptosis and splicing regulation. Has a broad substrate specificity; phosphorylates BCL2L14, CDC25B, MAP3K5/ASK1 and ZNF622. Acts as an activator of apoptosis by phosphorylating and activating MAP3K5/ASK1. Acts as a regulator of cell cycle, notably by mediating phosphorylation of CDC25B, promoting localization of CDC25B to the centrosome and the spindle poles during mitosis. Plays a key role in cell proliferation and carcinogenesis. Required for proliferation of embryonic and postnatal multipotent neural progenitors. Phosphorylates and inhibits BCL2L14, possibly leading to affect mammary carcinogenesis by mediating inhibition of the pro-apoptotic function of BCL2L14. Also involved in the inhibition of spliceosome assembly during mitosis by phosphorylating ZNF622, thereby contributing to its redirection to the nucleus. May also play a role in primitive hematopoiesis. This is Maternal embryonic leucine zipper kinase (MELK) from Homo sapiens (Human).